The chain runs to 171 residues: Protein BTG1 (171 aa).

Position 159 is a phosphoserine (Ser159).

This sequence belongs to the BTG family. Interacts with CNOT7 and CNOT8.

Its function is as follows. Anti-proliferative protein. The chain is Protein BTG1 (BTG1) from Bos taurus (Bovine).